The chain runs to 589 residues: Probable cytochrome P450 49a1 (589 aa).

The tract at residues 56 to 90 (TGESSNPKKLNVSQQPVTSVATTRTTASSLPAETT) is disordered. A compositionally biased stretch (polar residues) spans 57 to 71 (GESSNPKKLNVSQQP). A compositionally biased stretch (low complexity) spans 72 to 84 (VTSVATTRTTASS). Heme is bound at residue cysteine 536.

Belongs to the cytochrome P450 family. It depends on heme as a cofactor.

Its subcellular location is the endoplasmic reticulum membrane. The protein localises to the microsome membrane. May be involved in the metabolism of insect hormones and in the breakdown of synthetic insecticides. The protein is Probable cytochrome P450 49a1 (Cyp49a1) of Drosophila melanogaster (Fruit fly).